The sequence spans 378 residues: Succinate--CoA ligase [GDP-forming] subunit beta (378 aa).

Residues 9 to 235 (KEILARYGVP…VEAEHPLEVE (227 aa)) enclose the ATP-grasp domain. GTP is bound by residues lysine 45, 52-54 (GRG), valine 94, and glutamate 99. Mg(2+) contacts are provided by asparagine 190 and aspartate 204. Residues asparagine 255 and 312 to 314 (GIT) contribute to the substrate site.

It belongs to the succinate/malate CoA ligase beta subunit family. As to quaternary structure, heterotetramer of two alpha and two beta subunits. It depends on Mg(2+) as a cofactor.

The enzyme catalyses GTP + succinate + CoA = succinyl-CoA + GDP + phosphate. It carries out the reaction succinate + ATP + CoA = succinyl-CoA + ADP + phosphate. The protein operates within carbohydrate metabolism; tricarboxylic acid cycle; succinate from succinyl-CoA (ligase route): step 1/1. Succinyl-CoA synthetase functions in the citric acid cycle (TCA), coupling the hydrolysis of succinyl-CoA to the synthesis of either ATP or GTP and thus represents the only step of substrate-level phosphorylation in the TCA. The beta subunit provides nucleotide specificity of the enzyme and binds the substrate succinate, while the binding sites for coenzyme A and phosphate are found in the alpha subunit. Can use either ATP or GTP, but prefers GTP. The chain is Succinate--CoA ligase [GDP-forming] subunit beta from Thermus thermophilus.